Consider the following 153-residue polypeptide: Superoxide dismutase [Cu-Zn] (153 aa).

H45, H47, and H62 together coordinate Cu cation. A disulfide bridge links C56 with C145. Positions 62, 70, 79, and 82 each coordinate Zn(2+). H119 contributes to the Cu cation binding site.

Belongs to the Cu-Zn superoxide dismutase family. Homodimer. Cu cation is required as a cofactor. Zn(2+) serves as cofactor.

The protein localises to the cytoplasm. It catalyses the reaction 2 superoxide + 2 H(+) = H2O2 + O2. In terms of biological role, destroys radicals which are normally produced within the cells and which are toxic to biological systems. The protein is Superoxide dismutase [Cu-Zn] of Drosophila yakuba (Fruit fly).